Here is a 260-residue protein sequence, read N- to C-terminus: Thrombin-like enzyme bhalternin (260 aa).

The signal sequence occupies residues 1–18 (MVLIRVLANLLILQLSYA). Residues 19–24 (QKASEL) constitute a propeptide that is removed on maturation. In terms of domain architecture, Peptidase S1 spans 25–251 (VIGGDECNIN…YSEWIQSIIA (227 aa)). 5 disulfide bridges follow: Cys-31/Cys-165, Cys-50/Cys-66, Cys-144/Cys-212, Cys-176/Cys-191, and Cys-202/Cys-227. Asn-44 carries N-linked (GlcNAc...) asparagine glycosylation. Asn-81 carries an N-linked (GlcNAc...) asparagine glycan.

The protein belongs to the peptidase S1 family. Snake venom subfamily. In terms of assembly, monomer. As to expression, expressed by the venom gland.

It localises to the secreted. Its activity is regulated as follows. Inhibited by benzamidine and partially inhibited by EDTA. Thrombin-like snake venom serine protease that induces blood clotting in vitro, defibrinogenation in vivo (by intraperitoneal injection into mice), albuminolytic and fibrinogenolytic activities. Preferentially cleaves the alpha chain of fibrinogen (FGA). Causes hemolysis in the heart, causes apparent hyperemia and lymphocytic interstitial pneumonitis in the lung, causes necrosis and inflammatory infiltrate in the liver, and causes glomerular congestion in the kidney. Also provokes a drastic myonecrosis. In Bothrops alternatus (Urutu), this protein is Thrombin-like enzyme bhalternin.